The primary structure comprises 286 residues: 4-hydroxybenzoate octaprenyltransferase (286 aa).

Helical transmembrane passes span 22–42, 45–65, 98–118, 143–163, 213–233, 238–255, and 266–286; these read IGTL…EKAM, LSVL…GCVI, LFIV…LYTI, FFLG…TIEA, IIAL…YLSQ, YFIV…QCRL, and NAFL…LFGI.

This sequence belongs to the UbiA prenyltransferase family. Mg(2+) serves as cofactor.

It is found in the cell inner membrane. It catalyses the reaction all-trans-octaprenyl diphosphate + 4-hydroxybenzoate = 4-hydroxy-3-(all-trans-octaprenyl)benzoate + diphosphate. It functions in the pathway cofactor biosynthesis; ubiquinone biosynthesis. Its function is as follows. Catalyzes the prenylation of para-hydroxybenzoate (PHB) with an all-trans polyprenyl group. Mediates the second step in the final reaction sequence of ubiquinone-8 (UQ-8) biosynthesis, which is the condensation of the polyisoprenoid side chain with PHB, generating the first membrane-bound Q intermediate 3-octaprenyl-4-hydroxybenzoate. This chain is 4-hydroxybenzoate octaprenyltransferase, found in Histophilus somni (strain 129Pt) (Haemophilus somnus).